The sequence spans 158 residues: Transcription elongation factor GreA (158 aa).

This sequence belongs to the GreA/GreB family.

Its function is as follows. Necessary for efficient RNA polymerase transcription elongation past template-encoded arresting sites. The arresting sites in DNA have the property of trapping a certain fraction of elongating RNA polymerases that pass through, resulting in locked ternary complexes. Cleavage of the nascent transcript by cleavage factors such as GreA or GreB allows the resumption of elongation from the new 3'terminus. GreA releases sequences of 2 to 3 nucleotides. The sequence is that of Transcription elongation factor GreA from Rhizobium etli (strain CIAT 652).